The following is a 336-amino-acid chain: 3-isopropylmalate dehydrogenase (336 aa).

The substrate site is built by arginine 87, arginine 97, arginine 121, and aspartate 211. Aspartate 211, aspartate 235, and aspartate 239 together coordinate Mg(2+). An NAD(+)-binding site is contributed by 271 to 283 (GSAPDIAGQGIAD).

The protein belongs to the isocitrate and isopropylmalate dehydrogenases family. LeuB type 2 subfamily. As to quaternary structure, homodimer. It depends on Mg(2+) as a cofactor. Mn(2+) serves as cofactor.

It localises to the cytoplasm. The enzyme catalyses (2R,3S)-3-isopropylmalate + NAD(+) = 4-methyl-2-oxopentanoate + CO2 + NADH. Its pathway is amino-acid biosynthesis; L-leucine biosynthesis; L-leucine from 3-methyl-2-oxobutanoate: step 3/4. Its function is as follows. Catalyzes the oxidation of 3-carboxy-2-hydroxy-4-methylpentanoate (3-isopropylmalate) to 3-carboxy-4-methyl-2-oxopentanoate. The product decarboxylates to 4-methyl-2 oxopentanoate. This Mycolicibacterium gilvum (strain PYR-GCK) (Mycobacterium gilvum (strain PYR-GCK)) protein is 3-isopropylmalate dehydrogenase.